Reading from the N-terminus, the 272-residue chain is Undecaprenyl-diphosphatase (272 aa).

8 helical membrane passes run 4–24 (IHSL…EFLP), 45–65 (AETF…VMFW), 89–109 (LTLG…LVFH), 115–135 (LFNP…LIAA), 152–174 (TYRQ…FSRS), 189–209 (YAAS…ATAL), 225–245 (MFAV…KTFL), and 251–271 (ISFI…YVVF).

This sequence belongs to the UppP family.

It is found in the cell inner membrane. The catalysed reaction is di-trans,octa-cis-undecaprenyl diphosphate + H2O = di-trans,octa-cis-undecaprenyl phosphate + phosphate + H(+). Its function is as follows. Catalyzes the dephosphorylation of undecaprenyl diphosphate (UPP). Confers resistance to bacitracin. This chain is Undecaprenyl-diphosphatase, found in Citrobacter koseri (strain ATCC BAA-895 / CDC 4225-83 / SGSC4696).